Reading from the N-terminus, the 141-residue chain is Hemoglobin subunit alpha (141 aa).

Residues 1–141 enclose the Globin domain; the sequence is VLSGDDKSNL…VSTVLTSKYR (141 aa). Serine 3 is subject to Phosphoserine. An N6-succinyllysine mark is found at lysine 7 and lysine 11. The residue at position 16 (lysine 16) is an N6-acetyllysine; alternate. An N6-succinyllysine; alternate modification is found at lysine 16. Tyrosine 24 carries the post-translational modification Phosphotyrosine. Lysine 40 carries the post-translational modification N6-succinyllysine. Serine 49 is modified (phosphoserine). Histidine 58 contributes to the O2 binding site. Histidine 87 is a heme b binding site. Phosphoserine is present on serine 102. Threonine 108 is subject to Phosphothreonine. 2 positions are modified to phosphoserine: serine 124 and serine 131. Phosphothreonine occurs at positions 134 and 137. Serine 138 carries the phosphoserine modification.

Belongs to the globin family. In terms of assembly, heterotetramer of two alpha chains and two beta chains. As to expression, red blood cells.

Involved in oxygen transport from the lung to the various peripheral tissues. This chain is Hemoglobin subunit alpha, found in Microtus pennsylvanicus (Meadow vole).